The following is a 405-amino-acid chain: uncharacterized protein (405 aa).

A run of 12 helical transmembrane segments spans residues 19-39 (IVSIVMFNFASYLTIGLPLAV), 47-67 (VMGFSAFWAGLVISLQYFATL), 85-105 (IVVFGLCGCFLSGLGYLTAGL), 107-127 (ASLPVISLLLLCLGRVILGIG), 156-176 (GIVTYGAMAMGAPLGVVFYHW), 178-198 (GLQALALIIMGVALVAILLAI), 224-244 (GMALALASAGFGVIATFITLF), 252-272 (GAAFALTLFSCAFVGTRLLFP), 283-303 (VAMICFSVEIIGLLLVGVATM), 309-329 (IGVLLAGAGFSLVFPALGVVA), 344-364 (TYTVFMDLSLGVTGPLAGLVM), and 366-386 (WAGVPVIYLAAAGLVAIALLL).

The protein belongs to the major facilitator superfamily. YhhS family.

Its subcellular location is the cell inner membrane. This is an uncharacterized protein from Shigella flexneri.